We begin with the raw amino-acid sequence, 303 residues long: ATP synthase gamma chain (303 aa).

The protein belongs to the ATPase gamma chain family. F-type ATPases have 2 components, CF(1) - the catalytic core - and CF(0) - the membrane proton channel. CF(1) has five subunits: alpha(3), beta(3), gamma(1), delta(1), epsilon(1). CF(0) has three main subunits: a, b and c.

The protein resides in the cell membrane. Produces ATP from ADP in the presence of a proton gradient across the membrane. The gamma chain is believed to be important in regulating ATPase activity and the flow of protons through the CF(0) complex. This Oenococcus oeni (strain ATCC BAA-331 / PSU-1) protein is ATP synthase gamma chain.